Here is a 238-residue protein sequence, read N- to C-terminus: Large ribosomal subunit protein uL2 (238 aa).

Residues 198–238 are disordered; it reads HPHGGGLHQSVSRPSTVSRNAPPGRKVGHIASRRTGRRGGA. Positions 206–216 are enriched in polar residues; the sequence is QSVSRPSTVSR. Basic residues predominate over residues 223–238; the sequence is KVGHIASRRTGRRGGA.

This sequence belongs to the universal ribosomal protein uL2 family. Part of the 50S ribosomal subunit. Forms a bridge to the 30S subunit in the 70S ribosome.

In terms of biological role, one of the primary rRNA binding proteins. Required for association of the 30S and 50S subunits to form the 70S ribosome, for tRNA binding and peptide bond formation. It has been suggested to have peptidyltransferase activity; this is somewhat controversial. Makes several contacts with the 16S rRNA in the 70S ribosome. The protein is Large ribosomal subunit protein uL2 of Sulfolobus acidocaldarius (strain ATCC 33909 / DSM 639 / JCM 8929 / NBRC 15157 / NCIMB 11770).